A 376-amino-acid polypeptide reads, in one-letter code: Lipoyl synthase, mitochondrial (376 aa).

Positions 102, 107, 113, 133, 137, 140, and 348 each coordinate [4Fe-4S] cluster. The region spanning 116-337 (GGEDKTATAT…EEVGGEMGFA (222 aa)) is the Radical SAM core domain.

This sequence belongs to the radical SAM superfamily. Lipoyl synthase family. The cofactor is [4Fe-4S] cluster.

Its subcellular location is the mitochondrion. The enzyme catalyses [[Fe-S] cluster scaffold protein carrying a second [4Fe-4S](2+) cluster] + N(6)-octanoyl-L-lysyl-[protein] + 2 oxidized [2Fe-2S]-[ferredoxin] + 2 S-adenosyl-L-methionine + 4 H(+) = [[Fe-S] cluster scaffold protein] + N(6)-[(R)-dihydrolipoyl]-L-lysyl-[protein] + 4 Fe(3+) + 2 hydrogen sulfide + 2 5'-deoxyadenosine + 2 L-methionine + 2 reduced [2Fe-2S]-[ferredoxin]. The protein operates within protein modification; protein lipoylation via endogenous pathway; protein N(6)-(lipoyl)lysine from octanoyl-[acyl-carrier-protein]: step 2/2. Its function is as follows. Catalyzes the radical-mediated insertion of two sulfur atoms into the C-6 and C-8 positions of the octanoyl moiety bound to the lipoyl domains of lipoate-dependent enzymes, thereby converting the octanoylated domains into lipoylated derivatives. In Branchiostoma floridae (Florida lancelet), this protein is Lipoyl synthase, mitochondrial.